A 365-amino-acid polypeptide reads, in one-letter code: Peptide chain release factor 2 (365 aa).

Residue Gln-251 is modified to N5-methylglutamine.

The protein belongs to the prokaryotic/mitochondrial release factor family. Post-translationally, methylated by PrmC. Methylation increases the termination efficiency of RF2.

The protein localises to the cytoplasm. Its function is as follows. Peptide chain release factor 2 directs the termination of translation in response to the peptide chain termination codons UGA and UAA. The chain is Peptide chain release factor 2 from Aliarcobacter butzleri (strain RM4018) (Arcobacter butzleri).